Consider the following 223-residue polypeptide: Noggin (223 aa).

Residues 1 to 26 (MDPPRLRVATYLLLLSVGLLLHGGAC) form the signal peptide. N-linked (GlcNAc...) asparagine glycosylation occurs at Asn61. 4 disulfide bridges follow: Cys143-Cys180, Cys166-Cys217, Cys172-Cys219, and Cys195-Cys204.

It belongs to the noggin family. In terms of assembly, homodimer.

The protein resides in the secreted. Inhibitor of bone morphogenetic proteins (BMP) signaling. The chain is Noggin (nog) from Takifugu rubripes (Japanese pufferfish).